Here is a 433-residue protein sequence, read N- to C-terminus: Schlafen-like protein 2 (433 aa).

The B30.2/SPRY domain occupies 1 to 168 (MADTSPRESK…LSVNFGSQPF (168 aa)). Positions 199-400 (EHVVVKLPFA…RRMASNKCVY (202 aa)) are SLFN-like fold. Active-site residues include Glu-211 and Glu-216.

It belongs to the Schlafen family. In terms of assembly, component of the trimeric PUCH (precursor of 21U RNA 5'-end cleavage holoenzyme) complex; consisting of tofu-1, tofu-2 and either slfl-3 or slfl-4. Within the complex, interacts (via N-terminus) with tofu-1 (via N-terminus); the interaction stabilizes tofu-2 and may form a functional nuclease. Within the complex, interacts (via N-terminus) with slfl-3 (via N-terminus); the presence of tofu-1 is required for this interaction. Mg(2+) serves as cofactor. In terms of tissue distribution, expressed in the germline.

The protein resides in the cytoplasm. It localises to the mitochondrion. With respect to regulation, inhibited by ethylenediaminetetraacetic acid (EDTA). Its function is as follows. Component of the trimeric PUCH (precursor of 21U RNA 5'-end cleavage holoenzyme) complex, that acts as an endoribonuclease processing the 5'-end of precursor Piwi-interacting RNAs (piRNAs). The PUCH complex consists of tofu-1, tofu-2 and either slfl-3 or slfl-4, with tofu-2 exhibiting endoribonuclease activity. PUCH-mediated processing strictly requires a 7-methyl-G cap (m7 G-cap) and an uracil at position three (U3). PUCH also exhibits a strict bias for piRNA precursors with an A or G at position 1. Mature piRNA production is enhanced by the interaction of PUCH with the PETISCO complex, which is stabilizing piRNA precursors and allows their processing by PUCH. The polypeptide is Schlafen-like protein 2 (Caenorhabditis elegans).